Reading from the N-terminus, the 405-residue chain is F-box/kelch-repeat protein At2g43445 (405 aa).

Positions 7–53 constitute an F-box domain; that stretch reads NTNSIYIVSELLEEIFLGLPLKSILKFKTVSKQWRSILESNLFVERR. Kelch repeat units lie at residues 146 to 197 and 356 to 400; these read RDKV…CVNG and THHD…VVGY.

The chain is F-box/kelch-repeat protein At2g43445 from Arabidopsis thaliana (Mouse-ear cress).